We begin with the raw amino-acid sequence, 373 residues long: Hydrogenase maturation factor HypD (373 aa).

Fe cation is bound by residues C41, C69, and C72.

This sequence belongs to the HypD family. In terms of assembly, monomer. Interacts with HypC. Forms a complex with HypC, or HybG, and HypE. The cofactor is [4Fe-4S] cluster.

It participates in protein modification; [NiFe] hydrogenase maturation. Its function is as follows. Involved in the maturation of [NiFe] hydrogenases. Involved in the biosynthesis of the Fe(CN)(2)CO cofactor. HypD may act as a scaffold on which the Fe(CN)(2)CO cofactor is formed. In complex with HypC, accepts the cyanide ligand generated by HypF and HypE, and also coordinates the carbon monoxide ligand. Required for the formation of all three hydrogenase isoenzymes. The sequence is that of Hydrogenase maturation factor HypD from Escherichia coli (strain K12).